The chain runs to 367 residues: tRNA-dihydrouridine(20a/20b) synthase [NAD(P)+] (367 aa).

FMN contacts are provided by residues 45-47 (PMV) and glutamine 99. Cysteine 128 functions as the Proton donor in the catalytic mechanism. FMN is bound by residues lysine 169, histidine 197, 231–233 (NGD), and 255–256 (VR).

This sequence belongs to the Dus family. Dus4 subfamily. It depends on FMN as a cofactor.

The enzyme catalyses 5,6-dihydrouridine(20a) in tRNA + NADP(+) = uridine(20a) in tRNA + NADPH + H(+). It carries out the reaction 5,6-dihydrouridine(20a) in tRNA + NAD(+) = uridine(20a) in tRNA + NADH + H(+). It catalyses the reaction 5,6-dihydrouridine(20b) in tRNA + NAD(+) = uridine(20b) in tRNA + NADH + H(+). The catalysed reaction is 5,6-dihydrouridine(20b) in tRNA + NADP(+) = uridine(20b) in tRNA + NADPH + H(+). The enzyme catalyses a 5,6-dihydrouridine in mRNA + NAD(+) = a uridine in mRNA + NADH + H(+). It carries out the reaction a 5,6-dihydrouridine in mRNA + NADP(+) = a uridine in mRNA + NADPH + H(+). Functionally, catalyzes the synthesis of dihydrouridine, a modified base found in the D-loop of most tRNAs. Specifically modifies U20a and U20b in cytoplasmic tRNAs. Also able to mediate dihydrouridylation of some mRNAs, thereby affecting their translation. The chain is tRNA-dihydrouridine(20a/20b) synthase [NAD(P)+] from Saccharomyces cerevisiae (strain ATCC 204508 / S288c) (Baker's yeast).